The following is a 440-amino-acid chain: Transposon Ty1-DR2 Gag polyprotein (440 aa).

Composition is skewed to polar residues over residues 1-31 and 137-168; these read MESQ…TTQD and VGTH…TNQH. Disordered regions lie at residues 1–75, 137–174, and 350–440; these read MESQ…PQAA, VGTH…PPPI, and QQES…PGTY. Positions 299–401 are RNA-binding; sequence NNGIPINNKV…NSQSRTARAH (103 aa). Residues 363 to 372 are compositionally biased toward basic and acidic residues; the sequence is SPSDEKKDSR. Positions 373–409 are enriched in polar residues; that stretch reads TYTNTTKPKSITRNSQKPNNSQSRTARAHNVSTSNNF. The span at 429 to 440 shows a compositional bias: basic and acidic residues; that stretch reads NKHDLHLRPGTY.

As to quaternary structure, homotrimer.

It is found in the cytoplasm. Its function is as follows. Capsid protein (CA) is the structural component of the virus-like particle (VLP), forming the shell that encapsulates the retrotransposons dimeric RNA genome. The particles are assembled from trimer-clustered units and there are holes in the capsid shells that allow for the diffusion of macromolecules. CA also has nucleocapsid-like chaperone activity, promoting primer tRNA(i)-Met annealing to the multipartite primer-binding site (PBS), dimerization of Ty1 RNA and initiation of reverse transcription. The protein is Transposon Ty1-DR2 Gag polyprotein (TY1A-DR2) of Saccharomyces cerevisiae (strain ATCC 204508 / S288c) (Baker's yeast).